The chain runs to 161 residues: C-type natriuretic peptide (161 aa).

A signal peptide spans M1–P22. Residues D19 to G135 are disordered. Positions A23–K139 are excised as a propeptide. Low complexity-rich tracts occupy residues L29–P60 and A76–R93. Positions L94–Q104 are enriched in basic and acidic residues. A compositionally biased stretch (gly residues) spans G120 to S130. A disulfide bridge connects residues C145 and C161.

It belongs to the natriuretic peptide family. As to expression, expressed by the venom gland.

The protein localises to the secreted. In terms of biological role, snake venom natriuretic peptide that has a vasorelaxant activity in rat aortic strips and a diuretic potency in anesthetized rats. May act by activating natriuretic receptors (NPR1 and/or NPR2). The protein is C-type natriuretic peptide of Rhabdophis tigrinus tigrinus (Tiger keelback snake).